Consider the following 226-residue polypeptide: Transcriptional activator plp-1 (226 aa).

It belongs to the PUR DNA-binding protein family.

It is found in the nucleus. The protein resides in the chromosome. Probable transcription activator. Binds telomeric DNA containing repeats of the sequence, 5'-TTAGGC-3'. Binds to end-1 promoter, activating end-1 expression, which is required for endoderm specification during embryonic development. The protein is Transcriptional activator plp-1 of Caenorhabditis elegans.